The sequence spans 421 residues: Membrane-associated protein UidC (421 aa).

The N-terminal stretch at Met-1–Ala-23 is a signal peptide.

Belongs to the outer membrane porin (Opr) (TC 1.B.25) family.

It localises to the cell outer membrane. Enhances the activity of the UidB (GusB) glucuronide transporter, on its own however it has no transport activity. Glucuronide transport does not occur in strain K12 due to a variant at position 100 of the UidB (GusB, AC P0CE44, AC P0CE45) protein. This is Membrane-associated protein UidC (uidC) from Escherichia coli (strain K12).